Reading from the N-terminus, the 464-residue chain is ATP synthase subunit beta 2 (464 aa).

Glycine 147–threonine 154 contacts ATP.

This sequence belongs to the ATPase alpha/beta chains family. F-type ATPases have 2 components, CF(1) - the catalytic core - and CF(0) - the membrane proton channel. CF(1) has five subunits: alpha(3), beta(3), gamma(1), delta(1), epsilon(1). CF(0) has four main subunits: a(1), b(1), b'(1) and c(9-12).

It localises to the cell inner membrane. It carries out the reaction ATP + H2O + 4 H(+)(in) = ADP + phosphate + 5 H(+)(out). Its function is as follows. Produces ATP from ADP in the presence of a proton gradient across the membrane. The catalytic sites are hosted primarily by the beta subunits. This Cereibacter sphaeroides (strain ATCC 17023 / DSM 158 / JCM 6121 / CCUG 31486 / LMG 2827 / NBRC 12203 / NCIMB 8253 / ATH 2.4.1.) (Rhodobacter sphaeroides) protein is ATP synthase subunit beta 2.